The primary structure comprises 205 residues: Adenylyl-sulfate kinase (205 aa).

Residue Gly-35–Ser-42 coordinates ATP. The Phosphoserine intermediate role is filled by Ser-109.

The protein belongs to the APS kinase family.

It catalyses the reaction adenosine 5'-phosphosulfate + ATP = 3'-phosphoadenylyl sulfate + ADP + H(+). It functions in the pathway sulfur metabolism; hydrogen sulfide biosynthesis; sulfite from sulfate: step 2/3. Functionally, catalyzes the synthesis of activated sulfate. The chain is Adenylyl-sulfate kinase from Acaryochloris marina (strain MBIC 11017).